A 205-amino-acid chain; its full sequence is Thiamine-phosphate synthase (205 aa).

4-amino-2-methyl-5-(diphosphooxymethyl)pyrimidine is bound by residues 37–41 (QVREK) and Asn69. Mg(2+) is bound by residues Asp70 and Asp89. Residue Ser108 coordinates 4-amino-2-methyl-5-(diphosphooxymethyl)pyrimidine. 2-[(2R,5Z)-2-carboxy-4-methylthiazol-5(2H)-ylidene]ethyl phosphate is bound at residue 134–136 (TGS). 4-amino-2-methyl-5-(diphosphooxymethyl)pyrimidine is bound at residue Lys137. 2-[(2R,5Z)-2-carboxy-4-methylthiazol-5(2H)-ylidene]ethyl phosphate-binding positions include Gly165 and 185–186 (IS).

This sequence belongs to the thiamine-phosphate synthase family. Mg(2+) is required as a cofactor.

It carries out the reaction 2-[(2R,5Z)-2-carboxy-4-methylthiazol-5(2H)-ylidene]ethyl phosphate + 4-amino-2-methyl-5-(diphosphooxymethyl)pyrimidine + 2 H(+) = thiamine phosphate + CO2 + diphosphate. The catalysed reaction is 2-(2-carboxy-4-methylthiazol-5-yl)ethyl phosphate + 4-amino-2-methyl-5-(diphosphooxymethyl)pyrimidine + 2 H(+) = thiamine phosphate + CO2 + diphosphate. It catalyses the reaction 4-methyl-5-(2-phosphooxyethyl)-thiazole + 4-amino-2-methyl-5-(diphosphooxymethyl)pyrimidine + H(+) = thiamine phosphate + diphosphate. Its pathway is cofactor biosynthesis; thiamine diphosphate biosynthesis; thiamine phosphate from 4-amino-2-methyl-5-diphosphomethylpyrimidine and 4-methyl-5-(2-phosphoethyl)-thiazole: step 1/1. Condenses 4-methyl-5-(beta-hydroxyethyl)thiazole monophosphate (THZ-P) and 2-methyl-4-amino-5-hydroxymethyl pyrimidine pyrophosphate (HMP-PP) to form thiamine monophosphate (TMP). The chain is Thiamine-phosphate synthase from Clostridium botulinum (strain Kyoto / Type A2).